Here is a 352-residue protein sequence, read N- to C-terminus: UDP-N-acetylglucosamine--N-acetylmuramyl-(pentapeptide) pyrophosphoryl-undecaprenol N-acetylglucosamine transferase 2 (352 aa).

UDP-N-acetyl-alpha-D-glucosamine is bound by residues 11-13 (SAG), arginine 164, serine 194, and glutamine 289.

The protein belongs to the glycosyltransferase 28 family. MurG subfamily.

It localises to the cell membrane. It catalyses the reaction di-trans,octa-cis-undecaprenyl diphospho-N-acetyl-alpha-D-muramoyl-L-alanyl-D-glutamyl-meso-2,6-diaminopimeloyl-D-alanyl-D-alanine + UDP-N-acetyl-alpha-D-glucosamine = di-trans,octa-cis-undecaprenyl diphospho-[N-acetyl-alpha-D-glucosaminyl-(1-&gt;4)]-N-acetyl-alpha-D-muramoyl-L-alanyl-D-glutamyl-meso-2,6-diaminopimeloyl-D-alanyl-D-alanine + UDP + H(+). The protein operates within cell wall biogenesis; peptidoglycan biosynthesis. In terms of biological role, cell wall formation. Catalyzes the transfer of a GlcNAc subunit on undecaprenyl-pyrophosphoryl-MurNAc-pentapeptide (lipid intermediate I) to form undecaprenyl-pyrophosphoryl-MurNAc-(pentapeptide)GlcNAc (lipid intermediate II). This chain is UDP-N-acetylglucosamine--N-acetylmuramyl-(pentapeptide) pyrophosphoryl-undecaprenol N-acetylglucosamine transferase 2, found in Bacillus cereus (strain ATCC 14579 / DSM 31 / CCUG 7414 / JCM 2152 / NBRC 15305 / NCIMB 9373 / NCTC 2599 / NRRL B-3711).